We begin with the raw amino-acid sequence, 107 residues long: Replication initiation control protein YabA (107 aa).

Zn(2+)-binding residues include H81, C83, C97, and C100.

This sequence belongs to the YabA family. In terms of assembly, homotetramer. Interacts with both DnaA and DnaN, acting as a bridge between these two proteins. Requires Zn(2+) as cofactor.

Its subcellular location is the cytoplasm. The protein localises to the nucleoid. In terms of biological role, involved in control of chromosome replication initiation. Inhibits the cooperative binding of DnaA to the oriC region, thus negatively regulating initiation of chromosome replication. Inhibits the ability of DnaA-ATP to form a helix on DNA; does not disassemble preformed DnaA-DNA helices. Decreases the residence time of DnaA on the chromosome at its binding sites (oriC, replication forks and promoter-binding sites). Tethers DnaA to the replication machinery via the DNA polymerase beta sliding clamp subunit (dnaN). Associates with oriC and other DnaA targets on the chromosome in a DnaA-dependent manner. The chain is Replication initiation control protein YabA from Streptococcus pyogenes serotype M3 (strain ATCC BAA-595 / MGAS315).